Consider the following 355-residue polypeptide: uncharacterized protein (355 aa).

3 disordered regions span residues 1 to 121 (MPID…MELR), 226 to 253 (RLMN…KSSM), and 336 to 355 (NLHR…RKRT). Acidic residues predominate over residues 24–37 (LESESSSESDYEEV). Residues 65–87 (ETKTSSNFQNINPVQTIDNSASE) show a composition bias toward polar residues. Over residues 91–105 (DASSAEGGSNSAASS) the composition is skewed to low complexity. The segment covering 106-117 (SEEEDSSDSEYE) has biased composition (acidic residues). Residues 226-245 (RLMNSEEREAQDLKDAEASR) are compositionally biased toward basic and acidic residues.

This is an uncharacterized protein from Schizosaccharomyces pombe (strain 972 / ATCC 24843) (Fission yeast).